The primary structure comprises 577 residues: Arginine--tRNA ligase (577 aa).

A 'HIGH' region motif is present at residues 122 to 132 (PNVAKEMHVGH).

It belongs to the class-I aminoacyl-tRNA synthetase family. Monomer.

It localises to the cytoplasm. The catalysed reaction is tRNA(Arg) + L-arginine + ATP = L-arginyl-tRNA(Arg) + AMP + diphosphate. In Salmonella choleraesuis (strain SC-B67), this protein is Arginine--tRNA ligase.